The following is a 155-amino-acid chain: uncharacterized protein (155 aa).

This is an uncharacterized protein from Agrobacterium vitis (Rhizobium vitis).